The chain runs to 337 residues: Protein MICROTUBULE BINDING PROTEIN 2C (337 aa).

The disordered stretch occupies residues 80 to 147; the sequence is RGSMTYTKMP…STSSLTEKDR (68 aa). Residues 89-103 are compositionally biased toward basic and acidic residues; sequence PSRESLYKKTSEVKG. The segment covering 120–142 has biased composition (polar residues); it reads KNVSSSQDGYAENFSTPSSTSSL. Coiled-coil stretches lie at residues 143 to 194, 223 to 250, and 294 to 314; these read TEKD…MKKD, VEKL…LQGE, and LQKM…AKEN.

It belongs to the microtubule binding protein 2C family. Interacts with KN-1. Binds to tobacco mosaic virus movement protein (TMV-MP) at microtubules. In terms of tissue distribution, constitutively expressed in leaves.

The protein resides in the cytoplasm. Its subcellular location is the cytoskeleton. Its function is as follows. Prevents homeodomain proteins (e.g. STM) association to plasmodesmata and, consequently, cell-to-cell transport. Binds to RNA. Alters KN1 RNA-binding capacity. Regulates cytoskeleton (e.g. actin) organization that determinates cell shape. Interferes with cell-to-cell transport of tobacco mosaic virus movement protein (TMV-MP) by mediating its accumulation at microtubules, thus interfering with cell-to-cell virus movement. The sequence is that of Protein MICROTUBULE BINDING PROTEIN 2C from Nicotiana tabacum (Common tobacco).